The primary structure comprises 246 residues: MKKILAEIAYDGSMYHGFQIQPTKPTIQGEIEKALMKINKKKIKIHSSGRTDKGVHAKRQIITFDININIQLNNLKKALNAILLKPGIKILKLKHVKNSFHPRFNAQKRKYSYCILNSDNYYPWESYQAYYVNKKLNINNLNQMAKILIGNHDFTTFSCIKDKSKSKFRHIHSAKFKKKGKYIIFEIIGSSFLWKMVRSIIGTMLDIEIKNESISTFETILKSKNRNLARTTAPANALFLDKVYYE.

D52 acts as the Nucleophile in catalysis. Y111 is a substrate binding site.

It belongs to the tRNA pseudouridine synthase TruA family. Homodimer.

The catalysed reaction is uridine(38/39/40) in tRNA = pseudouridine(38/39/40) in tRNA. Formation of pseudouridine at positions 38, 39 and 40 in the anticodon stem and loop of transfer RNAs. This chain is tRNA pseudouridine synthase A, found in Borreliella afzelii (strain PKo) (Borrelia afzelii).